The following is a 163-amino-acid chain: MIYIYFIYLKQDDPKKSTMRKLERFGIARRISPGGARDKLMLTRSADTVLSKNDRFIAERSGICVIEGSWNREDTFAGLRFPYGRRLPKLLAANPVNYGKLEKLSSIEAVAAALYIMGFQDDASAILSKYTWGQNFLQLNKNPLDEYREADPEKIPEIENAYF.

The S-adenosyl-L-methionine site is built by Thr-18, Ile-66, Leu-87, and Ser-106.

The protein belongs to the TDD superfamily. TSR3 family.

It localises to the cytoplasm. The catalysed reaction is an N(1)-methylpseudouridine in rRNA + S-adenosyl-L-methionine = N(1)-methyl-N(3)-[(3S)-3-amino-3-carboxypropyl]pseudouridine in rRNA + S-methyl-5'-thioadenosine + H(+). Its function is as follows. Aminocarboxypropyltransferase that catalyzes the aminocarboxypropyl transfer on pseudouridine corresponding to position 914 in M.jannaschii 16S rRNA. It constitutes the last step in biosynthesis of the hypermodified N1-methyl-N3-(3-amino-3-carboxypropyl) pseudouridine (m1acp3-Psi). The protein is 16S rRNA aminocarboxypropyltransferase of Thermoplasma acidophilum (strain ATCC 25905 / DSM 1728 / JCM 9062 / NBRC 15155 / AMRC-C165).